The primary structure comprises 264 residues: S-adenosylmethionine decarboxylase proenzyme (264 aa).

Ser-112 functions as the Schiff-base intermediate with substrate; via pyruvic acid in the catalytic mechanism. Ser-112 is subject to Pyruvic acid (Ser); by autocatalysis. Catalysis depends on His-117, which acts as the Proton acceptor; for processing activity. Residue Cys-140 is the Proton donor; for catalytic activity of the active site.

It belongs to the prokaryotic AdoMetDC family. Type 2 subfamily. As to quaternary structure, heterooctamer of four alpha and four beta chains arranged as a tetramer of alpha/beta heterodimers. Requires pyruvate as cofactor. In terms of processing, is synthesized initially as an inactive proenzyme. Formation of the active enzyme involves a self-maturation process in which the active site pyruvoyl group is generated from an internal serine residue via an autocatalytic post-translational modification. Two non-identical subunits are generated from the proenzyme in this reaction, and the pyruvate is formed at the N-terminus of the alpha chain, which is derived from the carboxyl end of the proenzyme. The post-translation cleavage follows an unusual pathway, termed non-hydrolytic serinolysis, in which the side chain hydroxyl group of the serine supplies its oxygen atom to form the C-terminus of the beta chain, while the remainder of the serine residue undergoes an oxidative deamination to produce ammonia and the pyruvoyl group blocking the N-terminus of the alpha chain.

The enzyme catalyses S-adenosyl-L-methionine + H(+) = S-adenosyl 3-(methylsulfanyl)propylamine + CO2. Its pathway is amine and polyamine biosynthesis; S-adenosylmethioninamine biosynthesis; S-adenosylmethioninamine from S-adenosyl-L-methionine: step 1/1. Its function is as follows. Catalyzes the decarboxylation of S-adenosylmethionine to S-adenosylmethioninamine (dcAdoMet), the propylamine donor required for the synthesis of the polyamines spermine and spermidine from the diamine putrescine. In Escherichia coli O127:H6 (strain E2348/69 / EPEC), this protein is S-adenosylmethionine decarboxylase proenzyme.